Reading from the N-terminus, the 89-residue chain is Small ribosomal subunit protein uS15 (89 aa).

Belongs to the universal ribosomal protein uS15 family. As to quaternary structure, part of the 30S ribosomal subunit. Forms a bridge to the 50S subunit in the 70S ribosome, contacting the 23S rRNA.

One of the primary rRNA binding proteins, it binds directly to 16S rRNA where it helps nucleate assembly of the platform of the 30S subunit by binding and bridging several RNA helices of the 16S rRNA. Its function is as follows. Forms an intersubunit bridge (bridge B4) with the 23S rRNA of the 50S subunit in the ribosome. The protein is Small ribosomal subunit protein uS15 of Methylocella silvestris (strain DSM 15510 / CIP 108128 / LMG 27833 / NCIMB 13906 / BL2).